The primary structure comprises 129 residues: Lysozyme C-3 (129 aa).

Residues 1 to 129 (KVYERCELAA…VSRWIRGCRL (129 aa)) enclose the C-type lysozyme domain. 4 disulfides stabilise this stretch: Cys6-Cys127, Cys30-Cys115, Cys64-Cys80, and Cys76-Cys94. Residues Glu35 and Asp52 contribute to the active site.

This sequence belongs to the glycosyl hydrolase 22 family.

The protein localises to the secreted. It catalyses the reaction Hydrolysis of (1-&gt;4)-beta-linkages between N-acetylmuramic acid and N-acetyl-D-glucosamine residues in a peptidoglycan and between N-acetyl-D-glucosamine residues in chitodextrins.. Lysozymes have primarily a bacteriolytic function; those in tissues and body fluids are associated with the monocyte-macrophage system and enhance the activity of immunoagents. The polypeptide is Lysozyme C-3 (Anas platyrhynchos (Mallard)).